The sequence spans 288 residues: Glutamate racemase (288 aa).

Residues 10 to 11 (DS) and 42 to 43 (YG) each bind substrate. C73 functions as the Proton donor/acceptor in the catalytic mechanism. 74 to 75 (NT) lines the substrate pocket. Residue C184 is the Proton donor/acceptor of the active site. 185–186 (TH) contacts substrate.

It belongs to the aspartate/glutamate racemases family.

It catalyses the reaction L-glutamate = D-glutamate. It functions in the pathway cell wall biogenesis; peptidoglycan biosynthesis. In terms of biological role, provides the (R)-glutamate required for cell wall biosynthesis. The protein is Glutamate racemase of Corynebacterium kroppenstedtii (strain DSM 44385 / JCM 11950 / CIP 105744 / CCUG 35717).